Here is a 150-residue protein sequence, read N- to C-terminus: Major facilitator superfamily domain-containing 14C pseudogene (150 aa).

The tract at residues 1–25 (MSVEPPPELEEKAASEPEAGAMPEK) is disordered. Residues 1–49 (MSVEPPPELEEKAASEPEAGAMPEKRAGAQAAGSTWLQGFGPPSVYHAA) lie on the Extracellular side of the membrane. A helical membrane pass occupies residues 50-70 (IVIFLEFFAWGLLTTPMLTVL). The Cytoplasmic portion of the chain corresponds to 71-82 (HETFSQHTFLMN). The helical transmembrane segment at 83 to 103 (GLIQGVKGLLSFLSAPLIGAL) threads the bilayer. At 104–111 (SDVWGRKP) the chain is on the extracellular side. The helical transmembrane segment at 112 to 132 (FLLGTVFFTCFPIPLMRISPC) threads the bilayer. Topologically, residues 133 to 150 (RVWWRAPVVPATCGRRMA) are cytoplasmic.

The protein belongs to the major facilitator superfamily.

The protein resides in the membrane. This Homo sapiens (Human) protein is Major facilitator superfamily domain-containing 14C pseudogene.